Consider the following 114-residue polypeptide: Fumarate reductase subunit D (114 aa).

3 helical membrane-spanning segments follow: residues 24–44 (VSAIFLPVVILIIGLLLPFGL), 50–70 (LITFAYSWIGKLVILVLTIFP), and 92–112 (GGFIFYGLATIYTVWVLFAVI).

It belongs to the FrdD family. In terms of assembly, part of an enzyme complex containing four subunits: a flavoprotein (FrdA), an iron-sulfur protein (FrdB), and two hydrophobic anchor proteins (FrdC and FrdD).

The protein resides in the cell inner membrane. Functionally, anchors the catalytic components of the fumarate reductase complex to the cell membrane, binds quinones. In Haemophilus influenzae (strain ATCC 51907 / DSM 11121 / KW20 / Rd), this protein is Fumarate reductase subunit D.